We begin with the raw amino-acid sequence, 382 residues long: 8-amino-7-oxononanoate synthase (382 aa).

Arg26 contributes to the substrate binding site. Position 104 to 105 (104 to 105) interacts with pyridoxal 5'-phosphate; that stretch reads GY. Residue His129 coordinates substrate. Pyridoxal 5'-phosphate is bound by residues Ser175, 200–203, and 232–235; these read DEAH and TLSK. An N6-(pyridoxal phosphate)lysine modification is found at Lys235. Thr345 provides a ligand contact to substrate.

This sequence belongs to the class-II pyridoxal-phosphate-dependent aminotransferase family. BioF subfamily. As to quaternary structure, homodimer. It depends on pyridoxal 5'-phosphate as a cofactor.

The catalysed reaction is 6-carboxyhexanoyl-[ACP] + L-alanine + H(+) = (8S)-8-amino-7-oxononanoate + holo-[ACP] + CO2. It functions in the pathway cofactor biosynthesis; biotin biosynthesis. Its function is as follows. Catalyzes the decarboxylative condensation of pimeloyl-[acyl-carrier protein] and L-alanine to produce 8-amino-7-oxononanoate (AON), [acyl-carrier protein], and carbon dioxide. This Mycobacterium sp. (strain JLS) protein is 8-amino-7-oxononanoate synthase.